A 149-amino-acid polypeptide reads, in one-letter code: Heat shock protein beta-3 (149 aa).

The region spanning K47–K149 is the sHSP domain.

Belongs to the small heat shock protein (HSP20) family.

It localises to the cytoplasm. The protein resides in the nucleus. Functionally, inhibitor of actin polymerization. The chain is Heat shock protein beta-3 (HSPB3) from Bos taurus (Bovine).